Here is a 463-residue protein sequence, read N- to C-terminus: Ataxin-10 homolog (463 aa).

It belongs to the ataxin-10 family.

The protein localises to the cytoplasm. In terms of biological role, may play a role in the regulation of cytokinesis. The protein is Ataxin-10 homolog (CTR86) of Candida albicans (strain SC5314 / ATCC MYA-2876) (Yeast).